The primary structure comprises 105 residues: Vacuolar ATPase assembly integral membrane protein VMA21 homolog (105 aa).

The disordered stretch occupies residues Met1–Ser26. Residues Met1–Leu36 lie on the Cytoplasmic side of the membrane. A helical membrane pass occupies residues Phe37 to Val57. At Leu58 to Lys68 the chain is on the lumenal side. Residues Val69–Ile89 traverse the membrane as a helical segment. At Tyr90–Asp105 the chain is on the cytoplasmic side.

Belongs to the VMA21 family.

The protein localises to the endoplasmic reticulum membrane. It is found in the endoplasmic reticulum-Golgi intermediate compartment membrane. Its subcellular location is the cytoplasmic vesicle. It localises to the COPII-coated vesicle membrane. In terms of biological role, required for the assembly of the V0 complex of the vacuolar ATPase (V-ATPase) in the endoplasmic reticulum. The sequence is that of Vacuolar ATPase assembly integral membrane protein VMA21 homolog from Drosophila erecta (Fruit fly).